A 337-amino-acid polypeptide reads, in one-letter code: GTPase Obg (337 aa).

The region spanning 4–162 is the Obg domain; that stretch reads SNFIDYVKVC…AWVILELKVL (159 aa). Residues 163-329 form the OBG-type G domain; sequence ADVGLVGFPN…LKDLLWTTMN (167 aa). GTP-binding positions include 169 to 176, 194 to 198, 216 to 219, 283 to 286, and 310 to 312; these read GFPNAGKS, FTTLA, DIPG, SKSD, and SSY. Mg(2+)-binding residues include Ser-176 and Thr-196.

It belongs to the TRAFAC class OBG-HflX-like GTPase superfamily. OBG GTPase family. Monomer. The cofactor is Mg(2+).

Its subcellular location is the cytoplasm. Functionally, an essential GTPase which binds GTP, GDP and possibly (p)ppGpp with moderate affinity, with high nucleotide exchange rates and a fairly low GTP hydrolysis rate. Plays a role in control of the cell cycle, stress response, ribosome biogenesis and in those bacteria that undergo differentiation, in morphogenesis control. The protein is GTPase Obg of Cytophaga hutchinsonii (strain ATCC 33406 / DSM 1761 / CIP 103989 / NBRC 15051 / NCIMB 9469 / D465).